The following is a 211-amino-acid chain: AIACAAAPGLRGPSAFNGAALSTPAKSSSAMKMSFESEIGAQAPLGFWDPLGLLADADQERFERLRYVEVKHGRIAMLAIAGHLTQQNTRLPGMLSNSANLSFADMPNGVAALSKIPPGGLAQIFGFIGFLELAVMKNVEGSFPGDFIIGGNPFASSWDSMSSETQASKRAIELNNGRAAQMGILGMMVHEELSNQPYITNDLLGASYTFN.

A chloroplast-targeting transit peptide spans 1–33 (AIACAAAPGLRGPSAFNGAALSTPAKSSSAMKM). Helical transmembrane passes span 75-95 (IAML…PGML), 116-136 (IPPG…LAVM), and 177-197 (GRAA…SNQP).

This sequence belongs to the fucoxanthin chlorophyll protein family. As to quaternary structure, the LHC complex of chromophytic algae is composed of fucoxanthin, chlorophyll A and C bound non-covalently by fucoxanthin chlorophyll proteins (FCPs). The ratio of pigments in this LHC is; fucoxanthin: chlorophyll C: chlorophyll A; (0.6-1): (0.1-0.3): (1).

It is found in the plastid. Its subcellular location is the chloroplast thylakoid membrane. In terms of biological role, the light-harvesting complex (LHC) functions as a light receptor, it captures and delivers excitation energy to photosystems with which it is closely associated. Energy is transferred from the carotenoid and chlorophyll C (or B) to chlorophyll A and the photosynthetic reaction centers where it is used to synthesize ATP and reducing power. This chain is Fucoxanthin-chlorophyll a-c binding protein F, chloroplastic (FCPF), found in Macrocystis pyrifera (Giant kelp).